The following is an 891-amino-acid chain: Protein translocase subunit SecA 1 (891 aa).

ATP contacts are provided by residues Gln-86, 104 to 108 (GEGKT), and Asp-493. A compositionally biased stretch (basic and acidic residues) spans 845-873 (KQVAKPIEASHGDGNRKKAPVVKEKEAGR). The segment at 845 to 891 (KQVAKPIEASHGDGNRKKAPVVKEKEAGRNDPCPCGSGKKYKKCCGE) is disordered. Residues Cys-877, Cys-879, Cys-888, and Cys-889 each contribute to the Zn(2+) site.

It belongs to the SecA family. Monomer and homodimer. Part of the essential Sec protein translocation apparatus which comprises SecA, SecYEG and auxiliary proteins SecDF. Other proteins may also be involved. The cofactor is Zn(2+).

The protein resides in the cell membrane. It localises to the cytoplasm. The enzyme catalyses ATP + H2O + cellular proteinSide 1 = ADP + phosphate + cellular proteinSide 2.. Functionally, part of the Sec protein translocase complex. Interacts with the SecYEG preprotein conducting channel. Has a central role in coupling the hydrolysis of ATP to the transfer of proteins into and across the cell membrane, serving as an ATP-driven molecular motor driving the stepwise translocation of polypeptide chains across the membrane. This Alkaliphilus metalliredigens (strain QYMF) protein is Protein translocase subunit SecA 1.